Reading from the N-terminus, the 161-residue chain is Cyclic pyranopterin monophosphate synthase (161 aa).

Residues 75-77 (MCH) and 115-116 (ME) contribute to the substrate site. Residue D130 is part of the active site.

This sequence belongs to the MoaC family. In terms of assembly, homohexamer; trimer of dimers.

It carries out the reaction (8S)-3',8-cyclo-7,8-dihydroguanosine 5'-triphosphate = cyclic pyranopterin phosphate + diphosphate. It participates in cofactor biosynthesis; molybdopterin biosynthesis. Catalyzes the conversion of (8S)-3',8-cyclo-7,8-dihydroguanosine 5'-triphosphate to cyclic pyranopterin monophosphate (cPMP). The polypeptide is Cyclic pyranopterin monophosphate synthase (Bacillus mycoides (strain KBAB4) (Bacillus weihenstephanensis)).